The sequence spans 1372 residues: DNA-directed RNA polymerase subunit beta (1372 aa).

The protein belongs to the RNA polymerase beta chain family. In terms of assembly, the RNAP catalytic core consists of 2 alpha, 1 beta, 1 beta' and 1 omega subunit. When a sigma factor is associated with the core the holoenzyme is formed, which can initiate transcription.

The enzyme catalyses RNA(n) + a ribonucleoside 5'-triphosphate = RNA(n+1) + diphosphate. Functionally, DNA-dependent RNA polymerase catalyzes the transcription of DNA into RNA using the four ribonucleoside triphosphates as substrates. The protein is DNA-directed RNA polymerase subunit beta of Psychrobacter sp. (strain PRwf-1).